A 214-amino-acid polypeptide reads, in one-letter code: Membrane-spanning 4-domains subfamily A member 3 (214 aa).

Residues 1–31 are disordered; that stretch reads MASHEVDNAELGSASAHGTPGSEAGPEELNT. Over 1 to 49 the chain is Cytoplasmic; the sequence is MASHEVDNAELGSASAHGTPGSEAGPEELNTSVYQPIDGSPDYQKAKLQ. Residues 50 to 70 form a helical membrane-spanning segment; that stretch reads VLGAIQILNAAMILALGVFLG. The Extracellular portion of the chain corresponds to 71-81; that stretch reads SLQYPYHFQKH. The chain crosses the membrane as a helical span at residues 82–102; that stretch reads FFFFTFYTGYPIWGAVFFCSS. Residues 103–124 lie on the Cytoplasmic side of the membrane; it reads GTLSVVAGIKPTRTWIQNSFGM. A helical membrane pass occupies residues 125 to 145; that stretch reads NIASATIALVGTAFLSLNIAV. Residues 146-175 are Extracellular-facing; the sequence is NIQSLRSCHSSSESPDLCNYMGSISNGMVS. A helical transmembrane segment spans residues 176–196; sequence LLLILTLLELCVTISTIAMWC. Residues 197–214 lie on the Cytoplasmic side of the membrane; it reads NANCCNSREEISSPPNSV.

Belongs to the MS4A family. As to quaternary structure, interacts with CDKN3. Interacts with CDKN3-CDK2 complexes through its binding to CDKN3; this interaction facilitates dissociation of cyclin A from CDKN3-CDK2 complexes. As to expression, expressed specifically in hematopoietic cells and tissues.

The protein localises to the endomembrane system. The protein resides in the cytoplasm. Its subcellular location is the perinuclear region. Its function is as follows. Hematopoietic modulator for the G1-S cell cycle transition. Modulates the level of phosphorylation of cyclin-dependent kinase 2 (CDK2) through its direct binding to cyclin-dependent kinase inhibitor 3 (CDKN3/KAP). The protein is Membrane-spanning 4-domains subfamily A member 3 (MS4A3) of Homo sapiens (Human).